We begin with the raw amino-acid sequence, 618 residues long: Probable arginine--tRNA ligase, cytoplasmic (618 aa).

Interaction with tRNA regions lie at residues 60-61 (ET) and 104-109 (NGIFLR). Residues 146-151 (EFSSPN), H160, Y359, D363, and Q387 contribute to the L-arginine site. Residues 149–160 (SPNIAKPFHAGH) carry the 'HIGH' region motif. The interval 496–510 (DTGPYLQYAHSRLSS) is interaction with tRNA.

Belongs to the class-I aminoacyl-tRNA synthetase family.

The protein resides in the cytoplasm. It catalyses the reaction tRNA(Arg) + L-arginine + ATP = L-arginyl-tRNA(Arg) + AMP + diphosphate. Its function is as follows. Forms part of a macromolecular complex that catalyzes the attachment of specific amino acids to cognate tRNAs during protein synthesis. This chain is Probable arginine--tRNA ligase, cytoplasmic (mrs1), found in Schizosaccharomyces pombe (strain 972 / ATCC 24843) (Fission yeast).